The sequence spans 644 residues: ATP-dependent zinc metalloprotease FtsH (644 aa).

Residues Met-1–Asn-11 lie on the Stromal side of the membrane. The helical transmembrane segment at Leu-12–Ile-32 threads the bilayer. Topologically, residues Gly-33 to Asn-128 are lumenal. A helical transmembrane segment spans residues Ile-129–Tyr-149. Topologically, residues Leu-150 to Asn-644 are stromal. Gly-226–Thr-233 lines the ATP pocket. His-447 contacts Zn(2+). Residue Glu-448 is part of the active site. Zn(2+)-binding residues include His-451 and Asp-525.

This sequence in the central section; belongs to the AAA ATPase family. The protein in the C-terminal section; belongs to the peptidase M41 family. In terms of assembly, homohexamer. Zn(2+) serves as cofactor.

The protein localises to the plastid. The protein resides in the chloroplast thylakoid membrane. In terms of biological role, acts as a processive, ATP-dependent zinc metallopeptidase. This chain is ATP-dependent zinc metalloprotease FtsH, found in Trieres chinensis (Marine centric diatom).